Reading from the N-terminus, the 461-residue chain is Gustatory and pheromone receptor 32a (461 aa).

Over 1-100 (MSPNTWVIEM…YSFFVRGVVH (100 aa)) the chain is Cytoplasmic. A helical membrane pass occupies residues 101 to 121 (ALTIFNVYSLFTPISAQLFFS). Residues 122 to 127 (YRETDN) lie on the Extracellular side of the membrane. A helical transmembrane segment spans residues 128–148 (VNQWIELLLCILTYTLTVFVC). Residues 149–180 (AHNTTSMLRIMNEILQLDEEVRRQFGANLSQN) are Cytoplasmic-facing. Residues 181–201 (FGFLVKFLVGITACQAYIIVL) traverse the membrane as a helical segment. Topologically, residues 202-214 (KIYAVQGEITPTS) are extracellular. The chain crosses the membrane as a helical span at residues 215 to 235 (YILLAFYGIQNGLTATYIVFA). The Cytoplasmic portion of the chain corresponds to 236–317 (SALLRIVYIR…YKGINDCCNL (82 aa)). A helical transmembrane segment spans residues 318–338 (ILVSFLGYSFYTVTTNCYNLF). Over 339 to 348 (VQITGKGMVS) the chain is Extracellular. Residues 349–369 (PNILQWCFAWLCLHVSLLALL) form a helical membrane-spanning segment. Over 370-414 (SRSCGLTTTEANATSQILARVYAKSKEYQNIIDKFLTKSIKQEVQ) the chain is Cytoplasmic. The chain crosses the membrane as a helical span at residues 415–435 (FTAYGFFAIDNSTLFKIFSAV). The Extracellular segment spans residues 436–461 (TTYLVILIQFKQLEDSKVEDPVPEQT).

The protein belongs to the insect chemoreceptor superfamily. Gustatory receptor (GR) family. Gr21a subfamily. Expressed in the adult labellar chemosensory neurons. Expressed in tarsal neurons for male-male courtship suppression. In larvae, is expressed in neurons of the terminal external chemosensory organ, and the dorsal and posterior external chemosensory organs.

Its subcellular location is the cell membrane. Functionally, gustatory receptor which mediates acceptance or avoidance behavior, depending on its substrates. Required for the response to N,N-Diethyl-meta-toluamide (DEET), the most widely used insect repellent worldwide. Functions as a pheromone receptor for a male inhibitory pheromone and promotes male-male aggression and suppresses male-male courtship. Also promotes preferentially virgin females courting over mated females. The sequence is that of Gustatory and pheromone receptor 32a (Gr32a) from Drosophila melanogaster (Fruit fly).